Reading from the N-terminus, the 276-residue chain is MALKEYKPMTPGLRGRIDLRKDEITAQKPEKSLTTGKKNRAGRDSRGRISVRGQGGGHKQKYRQIDFKRNKYGIPGTVRTIEYDPNRSANIALIFYADGEKRYIIAPKGLKIGQKIMSGEMATLDVANALPLEAIPVGFTVHNIELTIGRGGQMARSAGAGALVAAKEGEYVTIRLPSGETRLVNKKCYATIGEVGNEDHMNTSLGKAGRSRWLGIRPTVRGMAMNPIDHPLGGGEGRGKGRHPVTPWGQPCKGYKTRKKRNPSDSFIVSRRKKKN.

Disordered regions lie at residues 1–61 (MALK…HKQK) and 224–276 (AMNP…KKKN). Over residues 15–31 (GRIDLRKDEITAQKPEK) the composition is skewed to basic and acidic residues.

This sequence belongs to the universal ribosomal protein uL2 family. Part of the 50S ribosomal subunit. Forms a bridge to the 30S subunit in the 70S ribosome.

In terms of biological role, one of the primary rRNA binding proteins. Required for association of the 30S and 50S subunits to form the 70S ribosome, for tRNA binding and peptide bond formation. It has been suggested to have peptidyltransferase activity; this is somewhat controversial. Makes several contacts with the 16S rRNA in the 70S ribosome. This Treponema denticola (strain ATCC 35405 / DSM 14222 / CIP 103919 / JCM 8153 / KCTC 15104) protein is Large ribosomal subunit protein uL2.